Reading from the N-terminus, the 180-residue chain is UPF0340 protein BLi03936/BL03990 (180 aa).

It belongs to the UPF0340 family.

The chain is UPF0340 protein BLi03936/BL03990 from Bacillus licheniformis (strain ATCC 14580 / DSM 13 / JCM 2505 / CCUG 7422 / NBRC 12200 / NCIMB 9375 / NCTC 10341 / NRRL NRS-1264 / Gibson 46).